Here is an 80-residue protein sequence, read N- to C-terminus: UPF0291 protein YlaC (80 aa).

The protein belongs to the UPF0291 family.

The protein resides in the cytoplasm. In Lactococcus lactis subsp. lactis (strain IL1403) (Streptococcus lactis), this protein is UPF0291 protein YlaC (ylcA).